The primary structure comprises 726 residues: MAAAKWLIASLAFASSGLAFTPEDFISAPRRGEAIPDPKGELAVFHVSKYNFDKKDRPSGWNLLNLKNGDISVLTTDSDVSEITWLGDGTKVVYVNGTDSVEGGVGIWISDAKNFGNAYKAGSVNGAFSGLKLAKAGDKINFVGYGQSTTKGDLYNEAAAKEAVSSARIYDGLFVRHWDTYVGTQFNAVFSGSLTKNGDKYSFDGKLKNLVQPVKYAESPYPPFGGSGDYDLSSDGKTVAFMSKAPELPKANLTTSYIFLVPHDGSRVAEPINKRNGPRTPQGIEGASSSPVFSPDGKRIAYLQMATKNYESDRRVIHIAEVGSNKPVQRIASSWDRSPEAVKWSSDGRTLYVTAEDHATGKLFTLPADARDNHKPSVVKHDGSVSSFYFIGSSKSVLISGNSLWSNALYQVATPGRPNRKLFYANEHDPELKGLGPKDIEPLWVDGARTKIHSWIVKPTGFDKNKVYPLAFLIHGGPQGSWGDSWSTRWNPRVWADQGYVVVAPNPTGSTGFGQKLTDDITNDWGGAPYKDLVKIWEHVRDHIKYIDTDNGIAAGASFGGFMVNWIQGQDLGRKFKALVSHDGTFVGSSKIGTDELFFIEHDFNGTFFEARQNYDRWDCSKPELVAKWSTPQLVIHNDSDFRLSVAEGVGLFNVLQEKGIPSRFLNFPDETHWVTKPENSLVWHQQVLGWINKWSGINKSNPKSIKLSDCPIEVIDHEAHSYFDY.

An N-terminal signal peptide occupies residues M1–A19. 2 N-linked (GlcNAc...) asparagine glycosylation sites follow: N96 and N252. The segment at A269–P291 is disordered. S558 acts as the Charge relay system in catalysis. N605 and N638 each carry an N-linked (GlcNAc...) asparagine glycan. Catalysis depends on charge relay system residues D641 and H673. N-linked (GlcNAc...) asparagine glycosylation occurs at N699.

It belongs to the peptidase S9C family.

It is found in the secreted. In Trichophyton schoenleinii, this protein is Dipeptidyl-peptidase 5 (DPPV).